A 357-amino-acid polypeptide reads, in one-letter code: Beta-hexosaminidase (357 aa).

Substrate is bound by residues Asp-66, Arg-74, Arg-140, and Lys-170–His-171. His-183 (proton donor/acceptor) is an active-site residue. The active-site Nucleophile is Asp-254.

It belongs to the glycosyl hydrolase 3 family. NagZ subfamily.

The protein localises to the cytoplasm. It carries out the reaction Hydrolysis of terminal non-reducing N-acetyl-D-hexosamine residues in N-acetyl-beta-D-hexosaminides.. It participates in cell wall biogenesis; peptidoglycan recycling. Plays a role in peptidoglycan recycling by cleaving the terminal beta-1,4-linked N-acetylglucosamine (GlcNAc) from peptide-linked peptidoglycan fragments, giving rise to free GlcNAc, anhydro-N-acetylmuramic acid and anhydro-N-acetylmuramic acid-linked peptides. This chain is Beta-hexosaminidase, found in Chromobacterium violaceum (strain ATCC 12472 / DSM 30191 / JCM 1249 / CCUG 213 / NBRC 12614 / NCIMB 9131 / NCTC 9757 / MK).